Reading from the N-terminus, the 793-residue chain is Protocadherin beta-7 (793 aa).

An N-terminal signal peptide occupies residues 1 to 26; it reads MEARVERAVQKRQVLFLCVFLGMSWA. Residues 27–688 lie on the Extracellular side of the membrane; it reads GAEPLRYFVA…DQANSLTVYL (662 aa). Cadherin domains follow at residues 35 to 133, 138 to 242, 247 to 347, 352 to 451, and 456 to 561; these read VAEE…APVF, ISLK…APDF, YKVQ…RPEL, LTSP…APAF, and YTLF…SPFV. Asn169 is a glycosylation site (N-linked (GlcNAc...) asparagine). 2 N-linked (GlcNAc...) asparagine glycosylation sites follow: Asn418 and Asn436. The N-linked (GlcNAc...) asparagine glycan is linked to Asn567. Positions 568 to 671 constitute a Cadherin 6 domain; that stretch reads SSAPCTEPLP…LVDGFSQPYL (104 aa). A helical transmembrane segment spans residues 689-709; it reads VVALASVSSLFLLSVLLFVAV. Over 710–793 the chain is Cytoplasmic; it reads RLCRRSRAAP…NRPFQNNLGF (84 aa).

It localises to the cell membrane. Its function is as follows. Potential calcium-dependent cell-adhesion protein. May be involved in the establishment and maintenance of specific neuronal connections in the brain. This is Protocadherin beta-7 (PCDHB7) from Homo sapiens (Human).